The following is a 136-amino-acid chain: Large-conductance mechanosensitive channel (136 aa).

The next 2 helical transmembrane spans lie at 9–29 (AFAS…GAAF) and 79–99 (IQTV…LKAI).

It belongs to the MscL family. Homopentamer.

The protein localises to the cell inner membrane. In terms of biological role, channel that opens in response to stretch forces in the membrane lipid bilayer. May participate in the regulation of osmotic pressure changes within the cell. This Shewanella putrefaciens (strain CN-32 / ATCC BAA-453) protein is Large-conductance mechanosensitive channel.